The following is a 421-amino-acid chain: Ankyrin repeat and SOCS box protein 6 (421 aa).

ANK repeat units follow at residues 67–97 (EGVS…NLNF), 102–131 (TYYT…DVNR), 136–166 (HESS…DVNA), 170–205 (HGKT…DVKA), 226–255 (GGDK…DPSE), and 260–289 (ESLT…AYNC). One can recognise an SOCS box domain in the interval 360 to 415 (ALHFSLRQLESYPPPLKHLCRVAIRLYLQPWPVDVKVKALPLPDRLKWYLLSEHSG).

The protein belongs to the ankyrin SOCS box (ASB) family. Binds APS. Identified in a complex with ELOB and ELOC. Interacts with CUL5 and RNF7. Interacts with SQSTM1. Ubiquitinated by RNF41; leading to proteasomal degradation.

It localises to the cytoplasm. The protein operates within protein modification; protein ubiquitination. In terms of biological role, probable substrate-recognition component of a SCF-like ECS (Elongin-Cullin-SOCS-box protein) E3 ubiquitin-protein ligase complex which mediates the ubiquitination and subsequent proteasomal degradation of target proteins. May play a role in the regulation of cell proliferation and autophagy by promoting the ubiquitination and degradation of SQSTM1. This chain is Ankyrin repeat and SOCS box protein 6 (ASB6), found in Homo sapiens (Human).